The following is a 219-amino-acid chain: Octanoyltransferase (219 aa).

A BPL/LPL catalytic domain is found at 37–219 (EHSPDQLWIL…DFNDVQVILQ (183 aa)). Residues 76-83 (RGGQVTWH), 143-145 (SLG), and 156-158 (GLA) contribute to the substrate site. Cys174 acts as the Acyl-thioester intermediate in catalysis.

The protein belongs to the LipB family.

The protein resides in the cytoplasm. It catalyses the reaction octanoyl-[ACP] + L-lysyl-[protein] = N(6)-octanoyl-L-lysyl-[protein] + holo-[ACP] + H(+). It functions in the pathway protein modification; protein lipoylation via endogenous pathway; protein N(6)-(lipoyl)lysine from octanoyl-[acyl-carrier-protein]: step 1/2. Its function is as follows. Catalyzes the transfer of endogenously produced octanoic acid from octanoyl-acyl-carrier-protein onto the lipoyl domains of lipoate-dependent enzymes. Lipoyl-ACP can also act as a substrate although octanoyl-ACP is likely to be the physiological substrate. The protein is Octanoyltransferase of Acinetobacter baylyi (strain ATCC 33305 / BD413 / ADP1).